The chain runs to 211 residues: N-(5'-phosphoribosyl)anthranilate isomerase (211 aa).

The protein belongs to the TrpF family.

The catalysed reaction is N-(5-phospho-beta-D-ribosyl)anthranilate = 1-(2-carboxyphenylamino)-1-deoxy-D-ribulose 5-phosphate. The protein operates within amino-acid biosynthesis; L-tryptophan biosynthesis; L-tryptophan from chorismate: step 3/5. This Pseudomonas paraeruginosa (strain DSM 24068 / PA7) (Pseudomonas aeruginosa (strain PA7)) protein is N-(5'-phosphoribosyl)anthranilate isomerase.